A 222-amino-acid polypeptide reads, in one-letter code: UPF0758 protein Lcho_0695 (222 aa).

The MPN domain maps to 100–222 (VFDSPQAVRD…VVSFAERGLL (123 aa)). Residues histidine 171, histidine 173, and aspartate 184 each contribute to the Zn(2+) site. The short motif at 171–184 (HNHPSGVAEPSRAD) is the JAMM motif element.

The protein belongs to the UPF0758 family.

The protein is UPF0758 protein Lcho_0695 of Leptothrix cholodnii (strain ATCC 51168 / LMG 8142 / SP-6) (Leptothrix discophora (strain SP-6)).